The following is a 132-amino-acid chain: Flagellar basal body rod protein FlgB (132 aa).

It belongs to the flagella basal body rod proteins family. As to quaternary structure, the basal body constitutes a major portion of the flagellar organelle and consists of a number of rings mounted on a central rod. In Gram-negative bacteria, at least four rings, L, P, S and M are present, whereas Gram-positive bacteria lack the L and P rings. The rod consists of about 26 subunits of FlgG in the distal portion, and FlgB, FlgC and FlgF build up the proximal portion of the rod with about 6 subunits each. Rod assembly occurs by export via the flagellum-specific pathway of its constituent proteins and by their incorporation into the rod structure in the probable order of FlgB, FlgC, FlgF and FlgG. Another protein, FliE, also assembles onto the stable rod structure.

Its subcellular location is the bacterial flagellum basal body. In terms of biological role, structural component of flagellum, the bacterial motility apparatus. Part of the rod structure of flagellar basal body. This Aeromonas hydrophila protein is Flagellar basal body rod protein FlgB.